Reading from the N-terminus, the 576-residue chain is Proline--tRNA ligase (576 aa).

The protein belongs to the class-II aminoacyl-tRNA synthetase family. ProS type 1 subfamily. As to quaternary structure, homodimer.

It is found in the cytoplasm. The enzyme catalyses tRNA(Pro) + L-proline + ATP = L-prolyl-tRNA(Pro) + AMP + diphosphate. Its function is as follows. Catalyzes the attachment of proline to tRNA(Pro) in a two-step reaction: proline is first activated by ATP to form Pro-AMP and then transferred to the acceptor end of tRNA(Pro). As ProRS can inadvertently accommodate and process non-cognate amino acids such as alanine and cysteine, to avoid such errors it has two additional distinct editing activities against alanine. One activity is designated as 'pretransfer' editing and involves the tRNA(Pro)-independent hydrolysis of activated Ala-AMP. The other activity is designated 'posttransfer' editing and involves deacylation of mischarged Ala-tRNA(Pro). The misacylated Cys-tRNA(Pro) is not edited by ProRS. This Bordetella pertussis (strain Tohama I / ATCC BAA-589 / NCTC 13251) protein is Proline--tRNA ligase.